Reading from the N-terminus, the 685-residue chain is UvrABC system protein B (685 aa).

A Helicase ATP-binding domain is found at 39–420 (EGIGDGLMYQ…TYEAEHQGQV (382 aa)). An ATP-binding site is contributed by 52–59 (GVTGSGKT). A Beta-hairpin motif is present at residues 105 to 128 (YYDYYQPEAYVPSRDLFIEKDSSI). The Helicase C-terminal domain maps to 443 to 596 (QVDDLLSEAK…QIAFNQANGI (154 aa)). A UVR domain is found at 640–675 (AKSIRKLEKEMQEHARNLEFEKAAAARDELFRLRQR).

This sequence belongs to the UvrB family. As to quaternary structure, forms a heterotetramer with UvrA during the search for lesions. Interacts with UvrC in an incision complex.

It is found in the cytoplasm. The UvrABC repair system catalyzes the recognition and processing of DNA lesions. A damage recognition complex composed of 2 UvrA and 2 UvrB subunits scans DNA for abnormalities. Upon binding of the UvrA(2)B(2) complex to a putative damaged site, the DNA wraps around one UvrB monomer. DNA wrap is dependent on ATP binding by UvrB and probably causes local melting of the DNA helix, facilitating insertion of UvrB beta-hairpin between the DNA strands. Then UvrB probes one DNA strand for the presence of a lesion. If a lesion is found the UvrA subunits dissociate and the UvrB-DNA preincision complex is formed. This complex is subsequently bound by UvrC and the second UvrB is released. If no lesion is found, the DNA wraps around the other UvrB subunit that will check the other stand for damage. This is UvrABC system protein B from Aromatoleum aromaticum (strain DSM 19018 / LMG 30748 / EbN1) (Azoarcus sp. (strain EbN1)).